Here is a 567-residue protein sequence, read N- to C-terminus: Glucose-6-phosphate isomerase, cytosolic B (567 aa).

D-glucose 6-phosphate contacts are provided by residues 156–157 (GS), 212–217 (SKTFTT), glutamine 356, glutamate 360, histidine 391, and lysine 516. Catalysis depends on glutamate 360, which acts as the Proton donor. Catalysis depends on residues histidine 391 and lysine 516.

Belongs to the GPI family. Homodimer.

The protein localises to the cytoplasm. It carries out the reaction alpha-D-glucose 6-phosphate = beta-D-fructose 6-phosphate. The protein operates within carbohydrate degradation; glycolysis; D-glyceraldehyde 3-phosphate and glycerone phosphate from D-glucose: step 2/4. Catalyzes the conversion of glucose-6-phosphate to fructose-6-phosphate, the second step in glycolysis, and the reverse reaction during gluconeogenesis. This is Glucose-6-phosphate isomerase, cytosolic B from Oryza sativa subsp. japonica (Rice).